Consider the following 389-residue polypeptide: Type III polyketide synthase 21 (389 aa).

Residue cysteine 170 is the Nucleophile of the active site.

Belongs to the thiolase-like superfamily. Chalcone/stilbene synthases family. In terms of tissue distribution, expressed in anthers. Expressed in young and adult flowers.

Plant type III polyketide synthases (PKSs) that catalyzes the condensation of fatty acyl-CoA with malonyl-CoA to generate triketide and tetraketide alpha-pyrones, the main components of pollen exine and potential sporopollenin precursors. The chain is Type III polyketide synthase 21 (PKS21) from Oryza sativa subsp. japonica (Rice).